Consider the following 209-residue polypeptide: Uracil phosphoribosyltransferase (209 aa).

Residues R79, R104, and 131-139 (DPMLATGNS) contribute to the 5-phospho-alpha-D-ribose 1-diphosphate site. Uracil-binding positions include I194 and 199–201 (GDA). Position 200 (D200) interacts with 5-phospho-alpha-D-ribose 1-diphosphate.

The protein belongs to the UPRTase family. It depends on Mg(2+) as a cofactor.

The enzyme catalyses UMP + diphosphate = 5-phospho-alpha-D-ribose 1-diphosphate + uracil. Its pathway is pyrimidine metabolism; UMP biosynthesis via salvage pathway; UMP from uracil: step 1/1. Its activity is regulated as follows. Allosterically activated by GTP. In terms of biological role, catalyzes the conversion of uracil and 5-phospho-alpha-D-ribose 1-diphosphate (PRPP) to UMP and diphosphate. This Agrobacterium fabrum (strain C58 / ATCC 33970) (Agrobacterium tumefaciens (strain C58)) protein is Uracil phosphoribosyltransferase.